The chain runs to 339 residues: Anthranilate phosphoribosyltransferase (339 aa).

Residues Gly-81, Gly-84–Asp-85, Thr-89, Asn-91–Thr-94, Lys-109–Ser-117, and Ala-121 contribute to the 5-phospho-alpha-D-ribose 1-diphosphate site. Residue Gly-81 participates in anthranilate binding. Ser-93 contacts Mg(2+). Asn-112 is a binding site for anthranilate. An anthranilate-binding site is contributed by Arg-167. Residues Asp-226 and Glu-227 each coordinate Mg(2+).

Belongs to the anthranilate phosphoribosyltransferase family. Homodimer. The cofactor is Mg(2+).

It catalyses the reaction N-(5-phospho-beta-D-ribosyl)anthranilate + diphosphate = 5-phospho-alpha-D-ribose 1-diphosphate + anthranilate. It participates in amino-acid biosynthesis; L-tryptophan biosynthesis; L-tryptophan from chorismate: step 2/5. Functionally, catalyzes the transfer of the phosphoribosyl group of 5-phosphorylribose-1-pyrophosphate (PRPP) to anthranilate to yield N-(5'-phosphoribosyl)-anthranilate (PRA). This chain is Anthranilate phosphoribosyltransferase, found in Roseobacter denitrificans (strain ATCC 33942 / OCh 114) (Erythrobacter sp. (strain OCh 114)).